A 462-amino-acid polypeptide reads, in one-letter code: Glycoprotein endo-alpha-1,2-mannosidase (462 aa).

Topologically, residues 1–9 (MAKFRRRTC) are cytoplasmic. A helical; Signal-anchor for type II membrane protein membrane pass occupies residues 10 to 30 (ILLSLFILFIFSLMMGLKMLW). Residues 31–462 (PNAASFGPPF…YALDQQQPAS (432 aa)) are Lumenal-facing. The segment at 60–462 (DFQRSDRINM…YALDQQQPAS (403 aa)) is catalytic.

Belongs to the glycosyl hydrolase 99 family. Post-translationally, undergoes proteolytic cleavage in the C-terminal region.

It localises to the golgi apparatus membrane. The enzyme catalyses N-{alpha-Glc-(1-&gt;3)-alpha-Man-(1-&gt;2)-alpha-Man-(1-&gt;2)-alpha-Man-(1-&gt;3)-[alpha-Man-(1-&gt;2)-alpha-Man-(1-&gt;3)-[alpha-Man-(1-&gt;2)-alpha-Man-(1-&gt;6)]-alpha-Man-(1-&gt;6)]-beta-Man-(1-&gt;4)-beta-GlcNAc-(1-&gt;4)-beta-GlcNAc}-L-asparaginyl-[protein] + H2O = alpha-D-glucosyl-(1-&gt;3)-D-mannopyranose + N(4)-{alpha-D-Man-(1-&gt;2)-alpha-D-Man-(1-&gt;3)-[alpha-D-Man-(1-&gt;2)-alpha-D-Man-(1-&gt;3)-[alpha-D-Man-(1-&gt;2)-alpha-D-Man-(1-&gt;6)]-alpha-D-Man-(1-&gt;6)]-beta-D-Man-(1-&gt;4)-beta-D-GlaNAc-(1-&gt;4)-beta-D-GlcNAc}-L-asparaginyl-[protein] (N-glucan mannose isomer 8A1,2,3B1,2). This is Glycoprotein endo-alpha-1,2-mannosidase (Manea) from Mus musculus (Mouse).